Consider the following 372-residue polypeptide: Probable arabinan endo-1,5-alpha-L-arabinosidase B (372 aa).

Residues 1–16 (MTVLVALFCLVTWTLC) form the signal peptide. A compositionally biased stretch (low complexity) spans 23–34 (STQGTQQPQQPE). The disordered stretch occupies residues 23–52 (STQGTQQPQQPEKTPHPHPQPEDAFPPTHA). Asp-59 acts as the Proton acceptor in catalysis. A glycan (N-linked (GlcNAc...) asparagine) is linked at Asn-120. Glu-252 (proton donor) is an active-site residue. A glycan (N-linked (GlcNAc...) asparagine) is linked at Asn-363.

Belongs to the glycosyl hydrolase 43 family.

It is found in the secreted. It carries out the reaction Endohydrolysis of (1-&gt;5)-alpha-arabinofuranosidic linkages in (1-&gt;5)-arabinans.. It participates in glycan metabolism; L-arabinan degradation. Its function is as follows. Endo-1,5-alpha-L-arabinanase involved in degradation of pectin. Its preferred substrate is linear 1,5-alpha-L-arabinan. The protein is Probable arabinan endo-1,5-alpha-L-arabinosidase B (abnB) of Aspergillus fumigatus (strain CBS 144.89 / FGSC A1163 / CEA10) (Neosartorya fumigata).